Here is a 145-residue protein sequence, read N- to C-terminus: MMAEEQKVLTVNIVTPDGVVYDHHASMLVVPAMAGQLGIMANHEPIITPLEIGEIRVKRTDNPGHEDAIAITGGFMEVSHNIASIVADGAERARDINLSRAQRAKQRAEDAIKTASEKHDSDELRRAQIALQRAMNRIDVKNHLQ.

The disordered stretch occupies residues 100-123 (RAQRAKQRAEDAIKTASEKHDSDE). A compositionally biased stretch (basic and acidic residues) spans 106–123 (QRAEDAIKTASEKHDSDE).

The protein belongs to the ATPase epsilon chain family. As to quaternary structure, F-type ATPases have 2 components, CF(1) - the catalytic core - and CF(0) - the membrane proton channel. CF(1) has five subunits: alpha(3), beta(3), gamma(1), delta(1), epsilon(1). CF(0) has three main subunits: a, b and c.

It is found in the cell membrane. Functionally, produces ATP from ADP in the presence of a proton gradient across the membrane. This is ATP synthase epsilon chain from Latilactobacillus sakei subsp. sakei (strain 23K) (Lactobacillus sakei subsp. sakei).